The following is a 1260-amino-acid chain: UPF0507 protein LELG_01076 (1260 aa).

In terms of domain architecture, VPS9 spans 336-493 (ADYDPSATKV…LSDNDKGLNT (158 aa)).

The protein belongs to the UPF0507 family.

This is UPF0507 protein LELG_01076 from Lodderomyces elongisporus (strain ATCC 11503 / CBS 2605 / JCM 1781 / NBRC 1676 / NRRL YB-4239) (Yeast).